A 135-amino-acid chain; its full sequence is Lymphocyte antigen 6B (135 aa).

Residues 1–26 (MNRSCAMKSCVLILLLALLCAERAQG) form the signal peptide. One can recognise a UPAR/Ly6 domain in the interval 27–119 (LNCYNCTMIP…PTGGSTWTMA (93 aa)). Intrachain disulfides connect cysteine 29-cysteine 54, cysteine 32-cysteine 41, cysteine 47-cysteine 75, cysteine 79-cysteine 99, and cysteine 100-cysteine 105. Glycine 113 is lipidated: GPI-anchor amidated glycine. Residues 114–135 (STWTMAGVLLFILGSVLLQTLL) constitute a propeptide, removed in mature form.

It is found in the cell membrane. The chain is Lymphocyte antigen 6B (Ly6b) from Rattus norvegicus (Rat).